Reading from the N-terminus, the 997-residue chain is LPS-assembly protein LptD (997 aa).

The N-terminal stretch at 1–27 (MLYSPLYQSIRLILFGALGLSSLTVSA) is a signal peptide.

This sequence belongs to the LptD family. In terms of assembly, component of the lipopolysaccharide transport and assembly complex. Interacts with LptE and LptA.

The protein localises to the cell outer membrane. Together with LptE, is involved in the assembly of lipopolysaccharide (LPS) at the surface of the outer membrane. This chain is LPS-assembly protein LptD, found in Psychrobacter cryohalolentis (strain ATCC BAA-1226 / DSM 17306 / VKM B-2378 / K5).